A 356-amino-acid chain; its full sequence is Tyrosine recombinase XerS (356 aa).

The Core-binding (CB) domain occupies 16–121 (IMPWYVLEYY…ALSSLFKYLT (106 aa)). A Tyr recombinase domain is found at 169–354 (EFLEYIDCEY…VNDEQKNALD (186 aa)). Catalysis depends on residues R210, K234, H306, R309, and H332. The active-site O-(3'-phospho-DNA)-tyrosine intermediate is the Y341.

The protein belongs to the 'phage' integrase family. XerS subfamily.

It is found in the cytoplasm. With respect to regulation, ftsK is required for recombination. Its function is as follows. Site-specific tyrosine recombinase, which acts by catalyzing the cutting and rejoining of the recombining DNA molecules. Essential to convert dimers of the bacterial chromosome into monomers to permit their segregation at cell division. The chain is Tyrosine recombinase XerS from Streptococcus agalactiae serotype Ia (strain ATCC 27591 / A909 / CDC SS700).